Consider the following 38-residue polypeptide: Photosystem II reaction center protein L (38 aa).

Residues 17-37 (SLYWGLLLIFVLAVLFSSYIF) form a helical membrane-spanning segment.

This sequence belongs to the PsbL family. PSII is composed of 1 copy each of membrane proteins PsbA, PsbB, PsbC, PsbD, PsbE, PsbF, PsbH, PsbI, PsbJ, PsbK, PsbL, PsbM, PsbT, PsbX, PsbY, PsbZ, Psb30/Ycf12, at least 3 peripheral proteins of the oxygen-evolving complex and a large number of cofactors. It forms dimeric complexes.

The protein resides in the plastid. It is found in the chloroplast thylakoid membrane. Its function is as follows. One of the components of the core complex of photosystem II (PSII). PSII is a light-driven water:plastoquinone oxidoreductase that uses light energy to abstract electrons from H(2)O, generating O(2) and a proton gradient subsequently used for ATP formation. It consists of a core antenna complex that captures photons, and an electron transfer chain that converts photonic excitation into a charge separation. This subunit is found at the monomer-monomer interface and is required for correct PSII assembly and/or dimerization. This is Photosystem II reaction center protein L from Oltmannsiellopsis viridis (Marine flagellate).